The chain runs to 409 residues: Single Ig IL-1-related receptor (409 aa).

Topologically, residues 1–117 (MAGVCDMAPN…TLWRAGPAGH (117 aa)) are extracellular. Residues 9 to 108 (PNFLSPSEDQ…VWNVSSHSFT (100 aa)) enclose the Ig-like C2-type domain. N-linked (GlcNAc...) asparagine glycosylation is found at Asn-31, Asn-58, Asn-73, Asn-85, and Asn-101. Cys-32 and Cys-97 are disulfide-bonded. Residues 118–138 (VAAVLASLLVLVVLLLVALLY) form a helical; Signal-anchor for type III membrane protein membrane-spanning segment. Over 139-409 (VKCRLNMLLW…FYCLVSEDDV (271 aa)) the chain is Cytoplasmic. The region spanning 162-306 (KLYDAYVSYS…DFWKELQLAL (145 aa)) is the TIR domain. Residue Ser-382 is modified to Phosphoserine.

The protein belongs to the interleukin-1 receptor family. Interacts with IL1R1, IRAK1, TLR4, TLR5, TLR9 and TRAF6. Upon IL-1 stimulation found in a complex at least composed of IL1R1, SIGIRR, MYD88, IRAK1 and TRAF6. Upon stimulation with LPC found in a complex at least composed of TLR4, SIG1IR, MYD88, IRAK1 and TRAF6. Interacts with PALM3. In terms of tissue distribution, expressed at high levels in kidney, and at moderate levels in colon, small intestine, lung, spleen and liver. Not expressed in brain and muscle. Expressed at high levels in epithelial cells, at moderate levels in splenocytes, and at low or undetectable levels in fibroblasts or endothelial cells. Expressed in mucosal and dendritic cells.

The protein localises to the membrane. Functionally, acts as a negative regulator of the Toll-like and IL-1R receptor signaling pathways. Attenuates the recruitment of receptor-proximal signaling components to the TLR4 receptor, probably through an TIR-TIR domain interaction with TLR4. Through its extracellular domain interferes with the heterodimerization of Il1R1 and IL1RAP. This chain is Single Ig IL-1-related receptor (Sigirr), found in Mus musculus (Mouse).